A 645-amino-acid polypeptide reads, in one-letter code: Threonine--tRNA ligase (645 aa).

Positions Met1–Thr63 constitute a TGS domain. The tract at residues Asp242–Pro540 is catalytic. Zn(2+)-binding residues include Cys336, His387, and His517.

The protein belongs to the class-II aminoacyl-tRNA synthetase family. As to quaternary structure, homodimer. Zn(2+) is required as a cofactor.

It localises to the cytoplasm. The catalysed reaction is tRNA(Thr) + L-threonine + ATP = L-threonyl-tRNA(Thr) + AMP + diphosphate + H(+). In terms of biological role, catalyzes the attachment of threonine to tRNA(Thr) in a two-step reaction: L-threonine is first activated by ATP to form Thr-AMP and then transferred to the acceptor end of tRNA(Thr). Also edits incorrectly charged L-seryl-tRNA(Thr). The protein is Threonine--tRNA ligase of Staphylococcus aureus (strain Mu3 / ATCC 700698).